Consider the following 196-residue polypeptide: Inosine triphosphate pyrophosphatase 2 (196 aa).

Thr-20–Lys-25 is an ITP binding site. Glu-48 is a Mg(2+) binding site. ITP contacts are provided by residues Lys-61, Asp-77 to Thr-78, Lys-94, Phe-153 to Asp-156, Lys-177, and Pro-182 to Arg-183.

It belongs to the HAM1 NTPase family. As to quaternary structure, homodimer. Requires Mg(2+) as cofactor. The cofactor is Mn(2+).

The protein localises to the cytoplasm. The enzyme catalyses ITP + H2O = IMP + diphosphate + H(+). It catalyses the reaction dITP + H2O = dIMP + diphosphate + H(+). It carries out the reaction XTP + H2O = XMP + diphosphate + H(+). Its function is as follows. Pyrophosphatase that hydrolyzes non-canonical purine nucleotides such as inosine triphosphate (ITP), deoxyinosine triphosphate (dITP) or xanthosine 5'-triphosphate (XTP) to their respective monophosphate derivatives. The enzyme does not distinguish between the deoxy- and ribose forms. Probably excludes non-canonical purines from RNA and DNA precursor pools, thus preventing their incorporation into RNA and DNA and avoiding chromosomal lesions. This Trypanosoma cruzi (strain CL Brener) protein is Inosine triphosphate pyrophosphatase 2.